We begin with the raw amino-acid sequence, 88 residues long: Pigment dispersing factor homolog pdf-1 (88 aa).

An N-terminal signal peptide occupies residues 1–21 (MNRFIISMIALLAVFCAVSTA).

It localises to the secreted. Its function is as follows. Probable ligand of isoforms a and b of the calcitonin receptor-like protein, pdfr-1, a G-protein coupled receptor. May not signal through isoform c of pdfr-1. Involved in locomotion; more specifically mate searching behavior of males, independent of nutritional status. Involved in regulating the male-specific expression of TGFbeta-like daf-7 in the ASJ chemosensory neurons. Plays a role in circadian rhythms of locomotor activity. Involved in mediating arousal from the sleep-like state called lethargus, which occurs during molting between larval and adult stages, in part by regulating touch sensitivity, and working in concert with neuropeptide flp-2. In the presence of food, plays a role in initiating and extending exploratory roaming behavior, in opposition to 5-hydroxytryptamine (serotonin) signaling. The sequence is that of Pigment dispersing factor homolog pdf-1 from Caenorhabditis elegans.